The sequence spans 30 residues: Photosystem II reaction center protein Psb30 (30 aa).

The Lumenal segment spans residues 1 to 6; sequence EVIAQL. Residues 7–21 form a helical membrane-spanning segment; it reads TMIAMIGIAGPMIIF. The Cytoplasmic portion of the chain corresponds to 22-30; sequence LLAVRRGNL.

Belongs to the Psb30/Ycf12 family. In terms of assembly, PSII is composed of 1 copy each of membrane proteins PsbA, PsbB, PsbC, PsbD, PsbE, PsbF, PsbH, PsbI, PsbJ, PsbK, PsbL, PsbM, PsbT, PsbX, PsbY, PsbZ, Psb30/Ycf12, peripheral proteins PsbO, CyanoQ (PsbQ), PsbU, PsbV and a large number of cofactors. It forms dimeric complexes. PSII binds multiple chlorophylls, carotenoids and specific lipids. serves as cofactor.

It localises to the cellular thylakoid membrane. A core subunit of photosystem II (PSII), probably helps stabilize the reaction center. PSII is a light-driven water plastoquinone oxidoreductase, using light energy to abstract electrons from H(2)O, generating a proton gradient subsequently used for ATP formation. The chain is Photosystem II reaction center protein Psb30 from Thermostichus vulcanus (Synechococcus vulcanus).